A 165-amino-acid chain; its full sequence is Ribosome maturation factor RimM (165 aa).

The PRC barrel domain maps to 94-165; sequence EDEFYIADLT…YVILNYQREA (72 aa).

It belongs to the RimM family. As to quaternary structure, binds ribosomal protein uS19.

The protein resides in the cytoplasm. In terms of biological role, an accessory protein needed during the final step in the assembly of 30S ribosomal subunit, possibly for assembly of the head region. Essential for efficient processing of 16S rRNA. May be needed both before and after RbfA during the maturation of 16S rRNA. It has affinity for free ribosomal 30S subunits but not for 70S ribosomes. The polypeptide is Ribosome maturation factor RimM (Rickettsia rickettsii (strain Iowa)).